A 332-amino-acid polypeptide reads, in one-letter code: CAX-interacting protein 4 (332 aa).

The segment at 33–59 (GYDPYAPTSKEEPKTTQQKTEDPENSY) is disordered. Residues 41-54 (SKEEPKTTQQKTED) are compositionally biased toward basic and acidic residues. Residues 81–98 (GSCKKCGRVGHLTFQCRN) form a CCHC-type zinc finger. The segment covering 124 to 133 (IRRGVGKGEV) has biased composition (basic and acidic residues). A disordered region spans residues 124 to 332 (IRRGVGKGEV…RKRHHRKERE (209 aa)). Over residues 134 to 153 (EEVSSEEEEESESSDSDVDS) the composition is skewed to acidic residues. Positions 154–163 (EMERIIAERF) are enriched in basic and acidic residues. Basic residues-rich tracts occupy residues 198 to 214 (RKRR…HKRR) and 227 to 236 (SKRRKERRGR). Residues 241 to 250 (DDSDESEDED) are compositionally biased toward acidic residues. Composition is skewed to basic residues over residues 254-269 (VKRK…RSRR) and 314-332 (SSKR…KERE).

As to quaternary structure, interacts with CAX1. In terms of tissue distribution, expressed in leaves, stems and roots, and at lower levels in flowers.

It localises to the nucleus. In terms of biological role, may regulate CAX1 cation transporter. The chain is CAX-interacting protein 4 (CXIP4) from Arabidopsis thaliana (Mouse-ear cress).